A 298-amino-acid chain; its full sequence is Nucleotide-binding protein GTNG_3015 (298 aa).

Position 17–24 (17–24 (GMSGAGKT)) interacts with ATP. 68–71 (DLRS) contacts GTP.

This sequence belongs to the RapZ-like family.

In terms of biological role, displays ATPase and GTPase activities. In Geobacillus thermodenitrificans (strain NG80-2), this protein is Nucleotide-binding protein GTNG_3015.